Here is a 165-residue protein sequence, read N- to C-terminus: HTH-type transcriptional regulator IscR (165 aa).

An HTH rrf2-type domain is found at 2 to 131; the sequence is RLTSKGRYAV…NNITLAELVS (130 aa). The segment at residues 28-51 is a DNA-binding region (H-T-H motif); sequence LAEISERQGISLSYLEQLFSRLRK. [2Fe-2S] cluster-binding residues include cysteine 92, cysteine 98, and cysteine 104. Residues 144-165 are disordered; it reads NDTRRPLTNGRPQETINVNLHA. Residues 153 to 165 show a composition bias toward polar residues; the sequence is GRPQETINVNLHA.

The cofactor is [2Fe-2S] cluster.

Functionally, regulates the transcription of several operons and genes involved in the biogenesis of Fe-S clusters and Fe-S-containing proteins. The protein is HTH-type transcriptional regulator IscR of Sodalis glossinidius (strain morsitans).